Here is a 434-residue protein sequence, read N- to C-terminus: Probable exopolygalacturonase X (434 aa).

A signal peptide spans 1 to 23 (MKFLHTVAQTATLLLSLGASVEG). The disordered stretch occupies residues 35–54 (HHPFRPLPASTPRTKTCHVR). N113, N129, and N199 each carry an N-linked (GlcNAc...) asparagine glycan. A PbH1 1 repeat occupies 231 to 252 (SSNIVIQNSVVNNGDDCVSFKP). Catalysis depends on D245, which acts as the Proton donor. Cysteines 247 and 264 form a disulfide. Residues N253 and N265 are each glycosylated (N-linked (GlcNAc...) asparagine). Residues 254 to 274 (STDILVQNMHCNGSHGISVGS) form a PbH1 2 repeat. The active site involves H268. 5 N-linked (GlcNAc...) asparagine glycosylation sites follow: N292, N297, N329, N354, and N364. A PbH1 3 repeat occupies 327–348 (VSNITYDRMYIENVDWAIEVTQ). The stretch at 362-394 (PSNLTISDVHIKNMWGTTSGKRDPNVGTIVCSS) is one PbH1 4 repeat. A disulfide bridge connects residues C392 and C398. 2 N-linked (GlcNAc...) asparagine glycosylation sites follow: N407 and N430.

Belongs to the glycosyl hydrolase 28 family.

The protein resides in the secreted. The catalysed reaction is [(1-&gt;4)-alpha-D-galacturonosyl](n) + H2O = alpha-D-galacturonate + [(1-&gt;4)-alpha-D-galacturonosyl](n-1). Specific in hydrolyzing the terminal glycosidic bond of polygalacturonic acid and oligogalacturonates. The chain is Probable exopolygalacturonase X (pgaX) from Aspergillus terreus (strain NIH 2624 / FGSC A1156).